The chain runs to 736 residues: Microtubule-associated protein mu-2 (736 aa).

This sequence belongs to the orthoreovirus mu-2 protein family. Interacts with protein mu-NS; in viral inclusions. Interacts with polymerase lambda-3; this interaction stimulates the ATPase activity of mu-2. It depends on a divalent metal cation as a cofactor.

It localises to the virion. It is found in the host cytoplasm. The protein localises to the host cytoskeleton. Minor inner capsid (core) component. Displays NTPase and RNA 5'-triphosphatase (RTPase) activities. ATP is the preferred substrate for hydrolysis. May function as a cofactor of polymerase lambda-3. Associates with microtubules and plays a role in the formation, structural organization and morphology of viral inclusions, where the assembly of cores and the replication of viral RNA occur. Together with mu-NS, recruits the other core proteins to these inclusions. This is Microtubule-associated protein mu-2 (M1) from Mammalia (T3D).